The chain runs to 418 residues: Gamma-glutamyl phosphate reductase (418 aa).

It belongs to the gamma-glutamyl phosphate reductase family.

The protein resides in the cytoplasm. It catalyses the reaction L-glutamate 5-semialdehyde + phosphate + NADP(+) = L-glutamyl 5-phosphate + NADPH + H(+). It participates in amino-acid biosynthesis; L-proline biosynthesis; L-glutamate 5-semialdehyde from L-glutamate: step 2/2. In terms of biological role, catalyzes the NADPH-dependent reduction of L-glutamate 5-phosphate into L-glutamate 5-semialdehyde and phosphate. The product spontaneously undergoes cyclization to form 1-pyrroline-5-carboxylate. The protein is Gamma-glutamyl phosphate reductase of Geobacter sulfurreducens (strain ATCC 51573 / DSM 12127 / PCA).